A 297-amino-acid polypeptide reads, in one-letter code: HTH-type transcriptional regulator ArgP (297 aa).

The HTH lysR-type domain occupies 4-60 (PDYRTLQALDAVIRERGFERAAQKLCITQSAVSQRIKQLENMFGQPLLVRTVPPRPT). The H-T-H motif DNA-binding region spans 21 to 40 (FERAAQKLCITQSAVSQRIK).

It belongs to the LysR transcriptional regulatory family. Homodimer.

In terms of biological role, controls the transcription of genes involved in arginine and lysine metabolism. This chain is HTH-type transcriptional regulator ArgP, found in Salmonella arizonae (strain ATCC BAA-731 / CDC346-86 / RSK2980).